The sequence spans 229 residues: Demethylmenaquinone methyltransferase (229 aa).

Residues Thr-57, Asp-77, and 101–102 (DV) contribute to the S-adenosyl-L-methionine site.

Belongs to the class I-like SAM-binding methyltransferase superfamily. MenG/UbiE family.

It catalyses the reaction a 2-demethylmenaquinol + S-adenosyl-L-methionine = a menaquinol + S-adenosyl-L-homocysteine + H(+). It participates in quinol/quinone metabolism; menaquinone biosynthesis; menaquinol from 1,4-dihydroxy-2-naphthoate: step 2/2. Methyltransferase required for the conversion of demethylmenaquinol (DMKH2) to menaquinol (MKH2). This chain is Demethylmenaquinone methyltransferase, found in Chlamydia trachomatis serovar L2 (strain ATCC VR-902B / DSM 19102 / 434/Bu).